The chain runs to 181 residues: Ribulose bisphosphate carboxylase small subunit, chloroplastic (181 aa).

The transit peptide at methionine 1–glutamine 56 directs the protein to the chloroplast.

The protein belongs to the RuBisCO small chain family. Heterohexadecamer of 8 large and 8 small subunits.

It is found in the plastid. It localises to the chloroplast. Its function is as follows. RuBisCO catalyzes two reactions: the carboxylation of D-ribulose 1,5-bisphosphate, the primary event in carbon dioxide fixation, as well as the oxidative fragmentation of the pentose substrate. Both reactions occur simultaneously and in competition at the same active site. Although the small subunit is not catalytic it is essential for maximal activity. The chain is Ribulose bisphosphate carboxylase small subunit, chloroplastic from Lactuca sativa (Garden lettuce).